A 551-amino-acid chain; its full sequence is ATP synthase subunit alpha, mitochondrial (551 aa).

Residue 210-217 (GDRQTGKT) coordinates ATP.

The protein belongs to the ATPase alpha/beta chains family. F-type ATPases have 2 components, CF(1) - the catalytic core - and CF(0) - the membrane proton channel. CF(1) has five subunits: alpha(3), beta(3), gamma(1), delta(1), epsilon(1). CF(0) has three main subunits: a, b and c.

It is found in the mitochondrion. It localises to the mitochondrion inner membrane. Mitochondrial membrane ATP synthase (F(1)F(0) ATP synthase or Complex V) produces ATP from ADP in the presence of a proton gradient across the membrane which is generated by electron transport complexes of the respiratory chain. F-type ATPases consist of two structural domains, F(1) - containing the extramembraneous catalytic core, and F(0) - containing the membrane proton channel, linked together by a central stalk and a peripheral stalk. During catalysis, ATP synthesis in the catalytic domain of F(1) is coupled via a rotary mechanism of the central stalk subunits to proton translocation. Subunits alpha and beta form the catalytic core in F(1). Rotation of the central stalk against the surrounding alpha(3)beta(3) subunits leads to hydrolysis of ATP in three separate catalytic sites on the beta subunits. Subunit alpha does not bear the catalytic high-affinity ATP-binding sites. The protein is ATP synthase subunit alpha, mitochondrial (atp-1) of Neurospora crassa (strain ATCC 24698 / 74-OR23-1A / CBS 708.71 / DSM 1257 / FGSC 987).